Here is a 337-residue protein sequence, read N- to C-terminus: GTP 3',8-cyclase (337 aa).

Positions 18–242 (NFGRRFHYLR…DKADILDGPA (225 aa)) constitute a Radical SAM core domain. Arg27 contributes to the GTP binding site. [4Fe-4S] cluster is bound by residues Cys34 and Cys38. Tyr40 is a binding site for S-adenosyl-L-methionine. Cys41 contributes to the [4Fe-4S] cluster binding site. Arg76 contacts GTP. Gly80 lines the S-adenosyl-L-methionine pocket. Thr107 is a binding site for GTP. Ser131 contributes to the S-adenosyl-L-methionine binding site. Lys168 is a GTP binding site. Position 202 (Met202) interacts with S-adenosyl-L-methionine. 2 residues coordinate [4Fe-4S] cluster: Cys265 and Cys268. 270–272 (RLR) is a GTP binding site. Cys282 is a [4Fe-4S] cluster binding site.

Belongs to the radical SAM superfamily. MoaA family. In terms of assembly, monomer and homodimer. [4Fe-4S] cluster serves as cofactor.

It catalyses the reaction GTP + AH2 + S-adenosyl-L-methionine = (8S)-3',8-cyclo-7,8-dihydroguanosine 5'-triphosphate + 5'-deoxyadenosine + L-methionine + A + H(+). The protein operates within cofactor biosynthesis; molybdopterin biosynthesis. In terms of biological role, catalyzes the cyclization of GTP to (8S)-3',8-cyclo-7,8-dihydroguanosine 5'-triphosphate. This Shewanella denitrificans (strain OS217 / ATCC BAA-1090 / DSM 15013) protein is GTP 3',8-cyclase.